The primary structure comprises 166 residues: Small ribosomal subunit protein uS5 (166 aa).

Residues 11 to 74 (LQEKLIAVNR…EKARRNMINV (64 aa)) enclose the S5 DRBM domain.

This sequence belongs to the universal ribosomal protein uS5 family. Part of the 30S ribosomal subunit. Contacts proteins S4 and S8.

With S4 and S12 plays an important role in translational accuracy. In terms of biological role, located at the back of the 30S subunit body where it stabilizes the conformation of the head with respect to the body. This is Small ribosomal subunit protein uS5 from Enterobacter sp. (strain 638).